Consider the following 147-residue polypeptide: Large ribosomal subunit protein uL16 (147 aa).

This sequence belongs to the universal ribosomal protein uL16 family. Part of the 50S ribosomal subunit.

In terms of biological role, binds 23S rRNA and is also seen to make contacts with the A and possibly P site tRNAs. This Clostridium acetobutylicum (strain ATCC 824 / DSM 792 / JCM 1419 / IAM 19013 / LMG 5710 / NBRC 13948 / NRRL B-527 / VKM B-1787 / 2291 / W) protein is Large ribosomal subunit protein uL16.